A 580-amino-acid chain; its full sequence is Protein O-linked-mannose beta-1,4-N-acetylglucosaminyltransferase 2 (580 aa).

Over 1–4 the chain is Cytoplasmic; sequence MHLS. The helical; Signal-anchor for type II membrane protein transmembrane segment at 5 to 25 threads the bilayer; sequence AVLNALLVSVLAAVLWKHVRL. The Lumenal segment spans residues 26-580; it reads REHAAALEEE…PFADVLVCNT (555 aa). Residues Asn99 and Asn276 are each glycosylated (N-linked (GlcNAc...) asparagine). The region spanning 488-580 is the Fibronectin type-III domain; it reads ARCQASVQGA…PFADVLVCNT (93 aa).

This sequence belongs to the glycosyltransferase 61 family.

It localises to the endoplasmic reticulum membrane. It catalyses the reaction 3-O-(alpha-D-mannosyl)-L-threonyl-[protein] + UDP-N-acetyl-alpha-D-glucosamine = 3-O-(N-acetyl-beta-D-glucosaminyl-(1-&gt;4)-alpha-D-mannosyl)-L-threonyl-[protein] + UDP + H(+). It functions in the pathway protein modification; protein glycosylation. Functionally, O-linked mannose beta-1,4-N-acetylglucosaminyltransferase that transfers UDP-N-acetyl-D-glucosamine to the 4-position of the mannose to generate N-acetyl-D-glucosamine-beta-1,4-O-D-mannosylprotein. Involved in the biosynthesis of the phosphorylated O-mannosyl trisaccharide (N-acetylgalactosamine-beta-3-N-acetylglucosamine-beta-4-(phosphate-6-)mannose), a carbohydrate structure present in alpha-dystroglycan (DAG1), which is required for binding laminin G-like domain-containing extracellular proteins with high affinity. The protein is Protein O-linked-mannose beta-1,4-N-acetylglucosaminyltransferase 2 (POMGNT2) of Canis lupus familiaris (Dog).